The following is a 127-amino-acid chain: Gamma-synuclein (127 aa).

Repeat copies occupy residues 20 to 30 and 31 to 41. The segment at 20 to 67 is 4 X 11 AA tandem repeats of [EGSA]-K-T-K-[EQ]-[GQ]-V-X(4); the sequence is EKTKQGVTEAAEKTKEGVMYVGAKTKENVVQSVTSVAEKTKEQANAVS. The stretch at 42–56 is one 3; approximate repeat; it reads AKTKENVVQSVTSVA. The stretch at 57–67 is repeat 4; the sequence is EKTKEQANAVS. Phosphoserine is present on residues Ser-67 and Ser-72. The tract at residues 96 to 127 is disordered; sequence RKEDLRPSAPQQEGEASKEKEEVAEEAQSGGD. Ser-124 bears the Phosphoserine; by BARK1, CaMK2 and CK2 mark.

This sequence belongs to the synuclein family. May be a centrosome-associated protein. Interacts with MYOC; affects its secretion and its aggregation. Phosphorylated. Phosphorylation by GRK5 appears to occur on residues distinct from the residue phosphorylated by other kinases. In terms of tissue distribution, highly expressed in brain, particularly in the substantia nigra. Also expressed in the corpus callosum, heart, skeletal muscle, ovary, testis, colon and spleen. Weak expression in pancreas, kidney and lung.

The protein resides in the cytoplasm. It localises to the perinuclear region. The protein localises to the cytoskeleton. It is found in the microtubule organizing center. Its subcellular location is the centrosome. The protein resides in the spindle. Functionally, plays a role in neurofilament network integrity. May be involved in modulating axonal architecture during development and in the adult. In vitro, increases the susceptibility of neurofilament-H to calcium-dependent proteases. May also function in modulating the keratin network in skin. Activates the MAPK and Elk-1 signal transduction pathway. The sequence is that of Gamma-synuclein (SNCG) from Homo sapiens (Human).